A 651-amino-acid polypeptide reads, in one-letter code: Transcription factor E2-alpha (651 aa).

Disordered regions lie at residues 32-107, 131-208, and 341-378; these read ANGK…SERN, LSLS…KTPS, and DHSS…ALSP. Composition is skewed to low complexity over residues 56–73, 131–148, and 341–354; these read SSGS…FDPS, LSLS…KSSS, and DHSS…PSTP. Serine 135 and serine 140 each carry phosphoserine. Threonine 353 is subject to Phosphothreonine. A Phosphoserine modification is found at serine 357. An Omega-N-methylarginine modification is found at arginine 369. Phosphoserine is present on serine 377. A leucine-zipper region spans residues 387–422; that stretch reads LSKMEDRLDEAIHVLRSHAVGTASDLHGLLPGHGAL. The segment at 457 to 549 is disordered; that stretch reads HNHASLPSQP…KAEREKERRV (93 aa). The span at 461-479 shows a compositional bias: low complexity; the sequence is SLPSQPSSLPDLSQRPPDS. A Glycyl lysine isopeptide (Lys-Gly) (interchain with G-Cter in SUMO2) cross-link involves residue lysine 496. Phosphoserine is present on serine 526. Residue aspartate 528 is modified to Phosphothreonine. Residue aspartate 533 is modified to Phosphoserine. The segment covering 539–549 has biased composition (basic and acidic residues); it reads QKAEREKERRV. Positions 546-599 constitute a bHLH domain; it reads ERRVANNARERLRVRDINEAFKELGRMCQLHLSSEKPQTKLLILHQAVAVILSL. Lysine 622 participates in a covalent cross-link: Glycyl lysine isopeptide (Lys-Gly) (interchain with G-Cter in SUMO2).

As to quaternary structure, homodimer. Heterodimer; efficient DNA binding requires dimerization with another bHLH protein. Forms a heterodimer with TWIST1 and TWIST2. Forms a heterodimer with NEUROD1; the heterodimer is inhibited in presence of ID2, but not NR0B2, to E-box element. Forms a heterodimer with TCF15; the heterodimer binds E-box element. Forms a heterodimer with MYOG; heterodimerization enhances MYOG DNA-binding and transcriptional activities. Forms a heterodimer with ATOH8; repress transcription of TCF3 and TCF3-NEUROG3 dimer-induced transactivation of E box-dependent promoters. Component of a nuclear TAL-1 complex composed at least of CBFA2T3, LDB1, TAL1 and TCF3. Interacts with NEUROD2. Interacts with EP300. Interacts with PTF1A, TGFB1I1 and UBE2I. Interacts with BHLHA9. Interacts with ASB2; the interaction is mediated by SKP2 and targets TCF3 for Notch-induced proteasomal degradation. Interacts with transcription factor ASCL5/AmeloD. Forms a heterodimer with ATOH7; required for ATOH7 DNA-binding. In terms of assembly, interacts with RALGAPA1. Interacts with FIGLA. Post-translationally, phosphorylated following NGF stimulation. In terms of processing, undergoes Notch-induced ubiquitination and subsequent proteasomal degradation which is mediated by ASB1 or ASB2, the substrate-recognition components of probable ECS E3 ubiquitin-protein ligase complexes.

Its subcellular location is the nucleus. Functionally, transcriptional regulator involved in the initiation of neuronal differentiation and mesenchymal to epithelial transition. Heterodimers between TCF3 and tissue-specific basic helix-loop-helix (bHLH) proteins play major roles in determining tissue-specific cell fate during embryogenesis, like muscle or early B-cell differentiation. Together with TCF15, required for the mesenchymal to epithelial transition. Dimers bind DNA on E-box motifs: 5'-CANNTG-3'. Binds to the kappa-E2 site in the kappa immunoglobulin gene enhancer. Binds to IEB1 and IEB2, which are short DNA sequences in the insulin gene transcription control region. In terms of biological role, facilitates ATOH7 binding to DNA at the consensus sequence 5'-CAGGTG-3', and positively regulates transcriptional activity. The sequence is that of Transcription factor E2-alpha (Tcf3) from Mus musculus (Mouse).